Consider the following 187-residue polypeptide: Putative carbonic anhydrase YtiB (187 aa).

The Zn(2+) site is built by C38, D40, H96, and C99.

It belongs to the beta-class carbonic anhydrase family. It depends on Zn(2+) as a cofactor.

It carries out the reaction hydrogencarbonate + H(+) = CO2 + H2O. Functionally, reversible hydration of carbon dioxide. This Bacillus subtilis (strain 168) protein is Putative carbonic anhydrase YtiB (ytiB).